A 388-amino-acid chain; its full sequence is S-adenosylmethionine synthase (388 aa).

H16 provides a ligand contact to ATP. D18 is a Mg(2+) binding site. Residue E44 coordinates K(+). Residues E57 and Q100 each coordinate L-methionine. The tract at residues 100-110 (QSPDIAQGVDK) is flexible loop. Residues 167 to 169 (DAK), 233 to 234 (RF), D242, 248 to 249 (RK), A265, and K269 each bind ATP. D242 contributes to the L-methionine binding site. K273 is a binding site for L-methionine.

The protein belongs to the AdoMet synthase family. Homotetramer; dimer of dimers. It depends on Mg(2+) as a cofactor. K(+) is required as a cofactor.

It is found in the cytoplasm. It catalyses the reaction L-methionine + ATP + H2O = S-adenosyl-L-methionine + phosphate + diphosphate. It participates in amino-acid biosynthesis; S-adenosyl-L-methionine biosynthesis; S-adenosyl-L-methionine from L-methionine: step 1/1. Functionally, catalyzes the formation of S-adenosylmethionine (AdoMet) from methionine and ATP. The overall synthetic reaction is composed of two sequential steps, AdoMet formation and the subsequent tripolyphosphate hydrolysis which occurs prior to release of AdoMet from the enzyme. This is S-adenosylmethionine synthase from Polynucleobacter asymbioticus (strain DSM 18221 / CIP 109841 / QLW-P1DMWA-1) (Polynucleobacter necessarius subsp. asymbioticus).